The primary structure comprises 530 residues: tRNA-2-methylthio-N(6)-dimethylallyladenosine synthase (530 aa).

Residues 19–134 (RTYEVRTYGC…LPTLLERARH (116 aa)) form the MTTase N-terminal domain. C28, C63, C97, C171, C175, and C178 together coordinate [4Fe-4S] cluster. The region spanning 157-387 (RDEIASGWVS…TALQERISHE (231 aa)) is the Radical SAM core domain. Residues 390 to 460 (QRVVGRTVEV…PFHLIADSVD (71 aa)) form the TRAM domain. Residues 509-530 (VPTTASTSAPVGDGSAHPRHRA) form a disordered region.

The protein belongs to the methylthiotransferase family. MiaB subfamily. In terms of assembly, monomer. It depends on [4Fe-4S] cluster as a cofactor.

It is found in the cytoplasm. The catalysed reaction is N(6)-dimethylallyladenosine(37) in tRNA + (sulfur carrier)-SH + AH2 + 2 S-adenosyl-L-methionine = 2-methylsulfanyl-N(6)-dimethylallyladenosine(37) in tRNA + (sulfur carrier)-H + 5'-deoxyadenosine + L-methionine + A + S-adenosyl-L-homocysteine + 2 H(+). Functionally, catalyzes the methylthiolation of N6-(dimethylallyl)adenosine (i(6)A), leading to the formation of 2-methylthio-N6-(dimethylallyl)adenosine (ms(2)i(6)A) at position 37 in tRNAs that read codons beginning with uridine. The polypeptide is tRNA-2-methylthio-N(6)-dimethylallyladenosine synthase (Clavibacter sepedonicus (Clavibacter michiganensis subsp. sepedonicus)).